The primary structure comprises 437 residues: tRNA-2-methylthio-N(6)-dimethylallyladenosine synthase (437 aa).

Positions M1 to A115 constitute an MTTase N-terminal domain. [4Fe-4S] cluster-binding residues include C10, C46, C78, C148, C152, and C155. In terms of domain architecture, Radical SAM core spans K134–E367. The TRAM domain maps to K370–G436.

Belongs to the methylthiotransferase family. MiaB subfamily. In terms of assembly, monomer. It depends on [4Fe-4S] cluster as a cofactor.

The protein resides in the cytoplasm. The enzyme catalyses N(6)-dimethylallyladenosine(37) in tRNA + (sulfur carrier)-SH + AH2 + 2 S-adenosyl-L-methionine = 2-methylsulfanyl-N(6)-dimethylallyladenosine(37) in tRNA + (sulfur carrier)-H + 5'-deoxyadenosine + L-methionine + A + S-adenosyl-L-homocysteine + 2 H(+). Catalyzes the methylthiolation of N6-(dimethylallyl)adenosine (i(6)A), leading to the formation of 2-methylthio-N6-(dimethylallyl)adenosine (ms(2)i(6)A) at position 37 in tRNAs that read codons beginning with uridine. This Helicobacter pylori (strain G27) protein is tRNA-2-methylthio-N(6)-dimethylallyladenosine synthase.